The following is a 357-amino-acid chain: Non-structural protein NS2 (357 aa).

2 disordered regions span residues Asn163–Met199 and Leu228–His267. Acidic residues-rich tracts occupy residues Glu230–Asp241 and Asp250–Asp260.

It belongs to the orbivirus non-structural protein NS2 family.

Single-stranded RNA-binding protein. This is Non-structural protein NS2 (Segment-8) from Antilocapra americana (Pronghorn).